A 96-amino-acid chain; its full sequence is UPF0298 protein LCA_1075 (96 aa).

Belongs to the UPF0298 family.

It localises to the cytoplasm. In Latilactobacillus sakei subsp. sakei (strain 23K) (Lactobacillus sakei subsp. sakei), this protein is UPF0298 protein LCA_1075.